A 108-amino-acid polypeptide reads, in one-letter code: Replication restart protein PriB (108 aa).

In terms of domain architecture, SSB spans 8 to 108 (IDNRFSVMGV…LHAEQIEFID (101 aa)).

The protein belongs to the PriB family. Homodimer. Interacts with PriA and DnaT. Component of the replication restart primosome. Primosome assembly occurs via a 'hand-off' mechanism. PriA binds to replication forks, subsequently PriB then DnaT bind; DnaT then displaces ssDNA to generate the helicase loading substrate.

Its function is as follows. Involved in the restart of stalled replication forks, which reloads the replicative helicase on sites other than the origin of replication; the PriA-PriB pathway is the major replication restart pathway. During primosome assembly it facilitates complex formation between PriA and DnaT on DNA; stabilizes PriA on DNA. Stimulates the DNA unwinding activity of PriA helicase. The protein is Replication restart protein PriB of Haemophilus influenzae (strain 86-028NP).